Reading from the N-terminus, the 2359-residue chain is Low-reducing polyketide synthase drtA (2359 aa).

Residues 17-444 (LPPIAVVSFA…GANAHVIVEE (428 aa)) enclose the Ketosynthase family 3 (KS3) domain. Residues C190, H327, and H367 each act as for beta-ketoacyl synthase activity in the active site. Positions 556–868 (VFTGQGSQWP…QYLAALDRGK (313 aa)) are malonyl-CoA:ACP transacylase (MAT) domain. S648 serves as the catalytic For malonyltransferase activity. Positions 940–1077 (HELLGRKILG…GRISVRQVAA (138 aa)) are N-terminal hotdog fold. The tract at residues 940–1245 (HELLGRKILG…FKGLRFSELN (306 aa)) is dehydratase (DH) domain. The PKS/mFAS DH domain maps to 940–1250 (HELLGRKILG…FSELNMGDGV (311 aa)). The active-site Proton acceptor; for dehydratase activity is the H972. A C-terminal hotdog fold region spans residues 1089–1250 (AYSESAEHWY…FSELNMGDGV (162 aa)). D1153 acts as the Proton donor; for dehydratase activity in catalysis. Positions 1659 to 1970 (GSFDSLELYE…TGRHVGKVVV (312 aa)) are enoyl reductase (ER) domain. The segment at 1995–2172 (SYLITGGLHG…LSLDIGAVQD (178 aa)) is ketoreductase (KR) domain. Positions 2280–2356 (ALTEAAIELF…ALCSKLITRL (77 aa)) constitute a Carrier domain. S2316 is subject to O-(pantetheine 4'-phosphoryl)serine.

It participates in secondary metabolite biosynthesis; terpenoid biosynthesis. In terms of biological role, low-reducing polyketide synthase; part of the gene cluster that mediates the biosynthesis of various drimane-type sesquiterpene esters, compounds that exhibit diverse biological activities and are widely present in eukaryotes. The pathway begins with the synthesis of the backbone drimenol by the terpene cyclase drtB using farnesyl pyrophosphate (FPP) as substrate. The cytochrome P450 monooxygenase drtD is then responsible for the hydroxylations at C-6, C-9 and C-12, as well as the oxidation of hydroxyl groups at C-6 and C-11 to a ketone and an aldehyde, respectively. Then, the biosynthesis can go in two directions, either the hydroxylated drimenol is further hydroxylated at C-2 and C-3 by an enzyme(s) not associated with the drt cluster, or the FAD-binding oxidoreductase drtC further oxidizes C-11 or C-12 to form the butyrolactone ring. DrtB, drtD and drtC are solely responsible for the formation of the different drimane structures observed during drimane sesquiterpenes biosynthesis. The polyketide synthase drtA synthesizes different lengths (C6 and C8) of PKS chains, which are then oxidized to varying degrees by the short-chain dehydrogenase drtF. Finally, these PKS chains are transferred onto drimane sesquiterpenes by the acyltransferase drtE, forming the sesquiterpene esters. In addition to the different fatty acyl-CoA chains produced by drtA, drtE is also able to use cinnamoyl-CoA as a substrate. This chain is Low-reducing polyketide synthase drtA, found in Aspergillus calidoustus.